We begin with the raw amino-acid sequence, 443 residues long: Phosphoglucosamine mutase (443 aa).

S101 functions as the Phosphoserine intermediate in the catalytic mechanism. The Mg(2+) site is built by S101, D239, D241, and D243. Position 101 is a phosphoserine (S101).

Belongs to the phosphohexose mutase family. Mg(2+) is required as a cofactor. Activated by phosphorylation.

It carries out the reaction alpha-D-glucosamine 1-phosphate = D-glucosamine 6-phosphate. Catalyzes the conversion of glucosamine-6-phosphate to glucosamine-1-phosphate. The sequence is that of Phosphoglucosamine mutase from Francisella tularensis subsp. tularensis (strain FSC 198).